Reading from the N-terminus, the 393-residue chain is LL-diaminopimelate aminotransferase (393 aa).

Tyr-14 and Gly-41 together coordinate substrate. Pyridoxal 5'-phosphate is bound by residues Tyr-71, 104-105, Tyr-128, Asn-174, Tyr-205, and 233-235; these read AK and SFS. Residues Lys-105, Tyr-128, and Asn-174 each contribute to the substrate site. N6-(pyridoxal phosphate)lysine is present on Lys-236. Residues Arg-244 and Asn-275 each coordinate pyridoxal 5'-phosphate. 2 residues coordinate substrate: Asn-275 and Arg-369.

It belongs to the class-I pyridoxal-phosphate-dependent aminotransferase family. LL-diaminopimelate aminotransferase subfamily. As to quaternary structure, homodimer. Requires pyridoxal 5'-phosphate as cofactor.

The enzyme catalyses (2S,6S)-2,6-diaminopimelate + 2-oxoglutarate = (S)-2,3,4,5-tetrahydrodipicolinate + L-glutamate + H2O + H(+). It functions in the pathway amino-acid biosynthesis; L-lysine biosynthesis via DAP pathway; LL-2,6-diaminopimelate from (S)-tetrahydrodipicolinate (aminotransferase route): step 1/1. Functionally, involved in the synthesis of meso-diaminopimelate (m-DAP or DL-DAP), required for both lysine and peptidoglycan biosynthesis. Catalyzes the direct conversion of tetrahydrodipicolinate to LL-diaminopimelate. In Chlamydia muridarum (strain MoPn / Nigg), this protein is LL-diaminopimelate aminotransferase.